Reading from the N-terminus, the 587-residue chain is Tyrosine-protein kinase transforming protein Src (587 aa).

Residues 1–58 (MGSSKSKPKDPSQRRRSLEPPDSTHHGGFPASQTPNKTAAPDTHRTPSRSFGTVATEP) are disordered. Glycine 2 carries N-myristoyl glycine; by host lipidation. Positions 7–25 (KPKDPSQRRRSLEPPDSTH) are enriched in basic and acidic residues. Residues 81-142 (GGVTTFVALY…PSNYVAPSDS (62 aa)) form the SH3 domain. The SH2 domain occupies 148–245 (WYFGKITRRE…GLCHRLTNVC (98 aa)). Residues 267–520 (LRLEVKLGQG…YLQAFLEDYF (254 aa)) form the Protein kinase domain. Residues 273-281 (LGQGCFGEV) and lysine 295 each bind ATP. Catalysis depends on aspartate 386, which acts as the Proton acceptor. Tyrosine 416 carries the post-translational modification Phosphotyrosine; by autocatalysis.

This sequence belongs to the protein kinase superfamily. Tyr protein kinase family. SRC subfamily. In terms of processing, the phosphorylated form is termed pp60v-src.

The enzyme catalyses L-tyrosyl-[protein] + ATP = O-phospho-L-tyrosyl-[protein] + ADP + H(+). Functionally, this phosphoprotein, required for both the initiation and the maintenance of neoplastic transformation, is a protein kinase that catalyzes the phosphorylation of tyrosine residues in vitro. The sequence is that of Tyrosine-protein kinase transforming protein Src (V-SRC) from Galliformes.